We begin with the raw amino-acid sequence, 249 residues long: MAQYYPGTSKVAQNRRNFCNPEYELEKLREISDEDVVKILGHRAPGEEYPSVHPPLEEMDEPEDAIREMVEPIDGAKAGDRVRYIQFTDSMYFAPAQPYVRSRAYLCRYRGADAGTLSGRQIIETRERDLEKISKELLETEFFDPARSGVRGKSVHGHSLRLDEDGMMFDMLRRQIYNKDTGRVEMVKNQIGDELDEPVDLGEPLDEETLMNKTTIYRVDGEAYRDDTDAVEIMQRIHVLRSQGGYNPE.

Residue R120 coordinates coenzyme M.

This sequence belongs to the methyl-coenzyme M reductase gamma subunit family. MCR is a hexamer of two alpha, two beta, and two gamma chains, forming a dimer of heterotrimers. Coenzyme F430 is required as a cofactor.

The protein localises to the cytoplasm. The enzyme catalyses coenzyme B + methyl-coenzyme M = methane + coenzyme M-coenzyme B heterodisulfide. Its pathway is one-carbon metabolism; methyl-coenzyme M reduction; methane from methyl-coenzyme M: step 1/1. In terms of biological role, component of the methyl-coenzyme M reductase (MCR) I that catalyzes the reductive cleavage of methyl-coenzyme M (CoM-S-CH3 or 2-(methylthio)ethanesulfonate) using coenzyme B (CoB or 7-mercaptoheptanoylthreonine phosphate) as reductant which results in the production of methane and the mixed heterodisulfide of CoB and CoM (CoM-S-S-CoB). This is the final step in methanogenesis. The sequence is that of Methyl-coenzyme M reductase I subunit gamma (mcrG) from Methanothermobacter thermautotrophicus (strain ATCC 29096 / DSM 1053 / JCM 10044 / NBRC 100330 / Delta H) (Methanobacterium thermoautotrophicum).